A 397-amino-acid chain; its full sequence is 3-ketoacyl-CoA thiolase, mitochondrial (397 aa).

The transit peptide at 1–16 (MALLRGVFVVAAKRTP) directs the protein to the mitochondrion; not cleaved. Lysine 25 bears the N6-acetyllysine; alternate mark. N6-succinyllysine; alternate is present on lysine 25. The residue at position 45 (lysine 45) is an N6-succinyllysine. Cysteine 92 serves as the catalytic Acyl-thioester intermediate. Threonine 119 carries the post-translational modification Phosphothreonine. Serine 121 bears the Phosphoserine mark. Tyrosine 127 bears the Phosphotyrosine mark. Phosphothreonine is present on threonine 136. Lysine 137 is subject to N6-acetyllysine; alternate. The residue at position 137 (lysine 137) is an N6-succinyllysine; alternate. Serine 140 carries the phosphoserine modification. Lysine 143, lysine 171, lysine 191, and lysine 209 each carry N6-acetyllysine; alternate. 4 positions are modified to N6-succinyllysine; alternate: lysine 143, lysine 171, lysine 191, and lysine 209. N6-succinyllysine is present on residues lysine 211, lysine 212, and lysine 214. 2 residues coordinate CoA: arginine 224 and threonine 227. Lysine 234 is modified (N6-acetyllysine; alternate). An N6-succinyllysine; alternate modification is found at lysine 234. Lysine 240 is modified (N6-succinyllysine). Lysine 241 is subject to N6-acetyllysine. Serine 251 contacts CoA. Lysine 269 and lysine 270 each carry N6-acetyllysine. Lysine 305 is subject to N6-acetyllysine; alternate. An N6-succinyllysine; alternate modification is found at lysine 305. The residue at position 310 (serine 310) is a Phosphoserine. N6-acetyllysine; alternate is present on lysine 312. Lysine 312 is modified (N6-succinyllysine; alternate). Serine 333 carries the phosphoserine modification. N6-acetyllysine is present on residues lysine 340 and lysine 375. Catalysis depends on cysteine 382, which acts as the Proton donor/acceptor.

It belongs to the thiolase-like superfamily. Thiolase family. As to quaternary structure, homotetramer. Interacts with BNIP3.

It localises to the mitochondrion. The catalysed reaction is an acyl-CoA + acetyl-CoA = a 3-oxoacyl-CoA + CoA. It catalyses the reaction 2 acetyl-CoA = acetoacetyl-CoA + CoA. It carries out the reaction acetyl-CoA + H2O = acetate + CoA + H(+). The enzyme catalyses propanoyl-CoA + H2O = propanoate + CoA + H(+). The catalysed reaction is butanoyl-CoA + H2O = butanoate + CoA + H(+). It catalyses the reaction hexanoyl-CoA + H2O = hexanoate + CoA + H(+). It carries out the reaction octanoyl-CoA + H2O = octanoate + CoA + H(+). The enzyme catalyses decanoyl-CoA + H2O = decanoate + CoA + H(+). The catalysed reaction is dodecanoyl-CoA + H2O = dodecanoate + CoA + H(+). It catalyses the reaction tetradecanoyl-CoA + H2O = tetradecanoate + CoA + H(+). It carries out the reaction hexadecanoyl-CoA + H2O = hexadecanoate + CoA + H(+). Its pathway is lipid metabolism; fatty acid beta-oxidation. In the production of energy from fats, this is one of the enzymes that catalyzes the last step of the mitochondrial beta-oxidation pathway, an aerobic process breaking down fatty acids into acetyl-CoA. Using free coenzyme A/CoA, catalyzes the thiolytic cleavage of medium- to long-chain unbranched 3-oxoacyl-CoAs into acetyl-CoA and a fatty acyl-CoA shortened by two carbon atoms. Also catalyzes the condensation of two acetyl-CoA molecules into acetoacetyl-CoA and could be involved in the production of ketone bodies. Also displays hydrolase activity on various fatty acyl-CoAs. Thereby, could be responsible for the production of acetate in a side reaction to beta-oxidation. Abolishes BNIP3-mediated apoptosis and mitochondrial damage. The sequence is that of 3-ketoacyl-CoA thiolase, mitochondrial (ACAA2) from Homo sapiens (Human).